Here is a 173-residue protein sequence, read N- to C-terminus: Translation initiation factor IF-3 (173 aa).

Belongs to the IF-3 family. Monomer.

Its subcellular location is the cytoplasm. Functionally, IF-3 binds to the 30S ribosomal subunit and shifts the equilibrium between 70S ribosomes and their 50S and 30S subunits in favor of the free subunits, thus enhancing the availability of 30S subunits on which protein synthesis initiation begins. The protein is Translation initiation factor IF-3 of Lactiplantibacillus plantarum (strain ATCC BAA-793 / NCIMB 8826 / WCFS1) (Lactobacillus plantarum).